Reading from the N-terminus, the 309-residue chain is NADH-cytochrome b5 reductase 1 (309 aa).

Residues phenylalanine 30–glycine 50 form a helical membrane-spanning segment. The FAD-binding FR-type domain maps to threonine 60–threonine 165. Residues threonine 145–glycine 160 and histidine 171–leucine 208 each bind FAD.

It belongs to the flavoprotein pyridine nucleotide cytochrome reductase family. In terms of assembly, monomer. Component of the 2-(3-amino-3-carboxypropyl)histidine synthase complex composed of dph1, dph2, dph3 and a NADH-dependent reductase, predominantly cbr1. It depends on FAD as a cofactor.

It is found in the mitochondrion outer membrane. It catalyses the reaction 2 Fe(III)-[cytochrome b5] + NADH = 2 Fe(II)-[cytochrome b5] + NAD(+) + H(+). The catalysed reaction is 2 Fe(3+)-[Dph3] + NADH = 2 Fe(2+)-[Dph3] + NAD(+) + H(+). The protein operates within protein modification; peptidyl-diphthamide biosynthesis. Functionally, NADH-dependent reductase for dph3 and cytochrome b5. Required for the first step of diphthamide biosynthesis, a post-translational modification of histidine which occurs in elongation factor 2. Dph1 and dph2 transfer a 3-amino-3-carboxypropyl (ACP) group from S-adenosyl-L-methionine (SAM) to a histidine residue, the reaction is assisted by a reduction system comprising dph3 and a NADH-dependent reductase, predominantly cbr1. By reducing dph3, also involved in the formation of the tRNA wobble base modification mcm5s 2U (5-methoxycarbonylmethyl-2-thiouridine), mediated by the elongator complex. The cytochrome b5/NADH cytochrome b5 reductase electron transfer system supports the catalytic activity of several sterol biosynthetic enzymes. The chain is NADH-cytochrome b5 reductase 1 (cbr1) from Neosartorya fischeri (strain ATCC 1020 / DSM 3700 / CBS 544.65 / FGSC A1164 / JCM 1740 / NRRL 181 / WB 181) (Aspergillus fischerianus).